The sequence spans 97 residues: DNA-binding protein HU (97 aa).

Belongs to the bacterial histone-like protein family. As to quaternary structure, has been isolated in complexes with 5S rRNA and bL25, and with 5S rRNA, bL25 and uL5. Homodimer.

In terms of biological role, histone-like DNA-binding protein which is capable of wrapping DNA to stabilize it, and thus to prevent its denaturation under extreme environmental conditions. This is DNA-binding protein HU from Thermus thermophilus (strain ATCC 27634 / DSM 579 / HB8).